A 1110-amino-acid chain; its full sequence is cGMP-specific 3',5'-cyclic phosphodiesterase (1110 aa).

2 stretches are compositionally biased toward low complexity: residues M1–S25 and T35–A55. Disordered stretches follow at residues M1–A55, I67–V128, and A184–S203. Positions A88–T103 are enriched in pro residues. A compositionally biased stretch (low complexity) spans S192–S203. 2 GAF domains span residues D233–I385 and N417–I601. Residues S631–V954 enclose the PDEase domain. H707 serves as the catalytic Proton donor. A divalent metal cation-binding residues include H711, H747, D748, and D858. Disordered regions lie at residues A997–L1028 and L1040–L1110. Composition is skewed to basic and acidic residues over residues D1006–R1015 and L1056–S1068. Residues G1082 to V1097 are compositionally biased toward low complexity. Residues S1100–L1110 are compositionally biased toward basic residues. The residue at position 1107 (C1107) is a Cysteine methyl ester. C1107 is lipidated: S-farnesyl cysteine. The propeptide at S1108–L1110 is removed in mature form.

It belongs to the cyclic nucleotide phosphodiesterase family. In terms of assembly, interacts with PrBP. The cofactor is a divalent metal cation.

It is found in the cell membrane. It catalyses the reaction 3',5'-cyclic GMP + H2O = GMP + H(+). Its function is as follows. Has a role regulating cGMP transport in Malpighian tubule principal cells. This is cGMP-specific 3',5'-cyclic phosphodiesterase from Drosophila pseudoobscura pseudoobscura (Fruit fly).